A 139-amino-acid polypeptide reads, in one-letter code: D-ribose pyranase (139 aa).

His-20 (proton donor) is an active-site residue. Residues Asp-28, His-106, and 128-130 (YAN) each bind substrate.

The protein belongs to the RbsD / FucU family. RbsD subfamily. As to quaternary structure, homodecamer.

It is found in the cytoplasm. The enzyme catalyses beta-D-ribopyranose = beta-D-ribofuranose. It functions in the pathway carbohydrate metabolism; D-ribose degradation; D-ribose 5-phosphate from beta-D-ribopyranose: step 1/2. In terms of biological role, catalyzes the interconversion of beta-pyran and beta-furan forms of D-ribose. The sequence is that of D-ribose pyranase from Vibrio parahaemolyticus serotype O3:K6 (strain RIMD 2210633).